A 213-amino-acid chain; its full sequence is Large ribosomal subunit protein uL3 (213 aa).

A disordered region spans residues 135–155 (THGSKNHRLPGSTGAGTTPGR).

Belongs to the universal ribosomal protein uL3 family. As to quaternary structure, part of the 50S ribosomal subunit. Forms a cluster with proteins L14 and L19.

In terms of biological role, one of the primary rRNA binding proteins, it binds directly near the 3'-end of the 23S rRNA, where it nucleates assembly of the 50S subunit. The protein is Large ribosomal subunit protein uL3 of Synechocystis sp. (strain ATCC 27184 / PCC 6803 / Kazusa).